The sequence spans 155 residues: 2-C-methyl-D-erythritol 2,4-cyclodiphosphate synthase (155 aa).

The a divalent metal cation site is built by D8 and H10. 4-CDP-2-C-methyl-D-erythritol 2-phosphate-binding positions include 8–10 (DVH) and 34–35 (HS). H42 lines the a divalent metal cation pocket. Residues 56–58 (DIG), 61–65 (FPDSD), 132–135 (TTEE), F139, and R142 each bind 4-CDP-2-C-methyl-D-erythritol 2-phosphate.

It belongs to the IspF family. Homotrimer. A divalent metal cation is required as a cofactor.

It carries out the reaction 4-CDP-2-C-methyl-D-erythritol 2-phosphate = 2-C-methyl-D-erythritol 2,4-cyclic diphosphate + CMP. Its pathway is isoprenoid biosynthesis; isopentenyl diphosphate biosynthesis via DXP pathway; isopentenyl diphosphate from 1-deoxy-D-xylulose 5-phosphate: step 4/6. Functionally, involved in the biosynthesis of isopentenyl diphosphate (IPP) and dimethylallyl diphosphate (DMAPP), two major building blocks of isoprenoid compounds. Catalyzes the conversion of 4-diphosphocytidyl-2-C-methyl-D-erythritol 2-phosphate (CDP-ME2P) to 2-C-methyl-D-erythritol 2,4-cyclodiphosphate (ME-CPP) with a corresponding release of cytidine 5-monophosphate (CMP). The sequence is that of 2-C-methyl-D-erythritol 2,4-cyclodiphosphate synthase from Clostridium acetobutylicum (strain ATCC 824 / DSM 792 / JCM 1419 / IAM 19013 / LMG 5710 / NBRC 13948 / NRRL B-527 / VKM B-1787 / 2291 / W).